Reading from the N-terminus, the 130-residue chain is uncharacterized protein (130 aa).

Positions 1-100 are disordered; it reads MSSNSDNTEC…AEPDAAKEEP (100 aa). 2 stretches are compositionally biased toward basic and acidic residues: residues 57–75 and 91–100; these read YTTR…KMMD and AEPDAAKEEP.

This is an uncharacterized protein from Equine herpesvirus 1 (strain Ab4p) (EHV-1).